A 364-amino-acid polypeptide reads, in one-letter code: Flavonoid 3'-O-methyltransferase 3 (364 aa).

Aspartate 232 contributes to the S-adenosyl-L-methionine binding site. Catalysis depends on histidine 270, which acts as the Proton acceptor.

Belongs to the class I-like SAM-binding methyltransferase superfamily. Cation-independent O-methyltransferase family. In terms of assembly, homodimer.

It carries out the reaction quercetin + S-adenosyl-L-methionine = isorhamnetin + S-adenosyl-L-homocysteine + H(+). The enzyme catalyses luteolin + S-adenosyl-L-methionine = chrysoeriol + S-adenosyl-L-homocysteine + H(+). The catalysed reaction is a 3'-hydroxyflavone + S-adenosyl-L-methionine = a 3'-methoxyflavone + S-adenosyl-L-homocysteine + H(+). It catalyses the reaction rhamnetin + S-adenosyl-L-methionine = rhamnacene + S-adenosyl-L-homocysteine + H(+). It carries out the reaction 3',4',7,8-tetrahydroxyflavone + S-adenosyl-L-methionine = 4',7,8-trihydroxy-3'-methoxyflavone-7-olate + S-adenosyl-L-homocysteine + H(+). The enzyme catalyses taxifolin + S-adenosyl-L-methionine = taxifolin 3'-methyl ether + S-adenosyl-L-homocysteine + H(+). It functions in the pathway flavonoid metabolism. Functionally, flavonoid 3'-O-methyltransferase involved in the biosynthesis of polymethoxylated flavonoids natural products such as pebrellin, aroma compounds which contribute to the flavor of peppermint, and exhibit pharmacological activities such as anti-allergic, anti-oxidant, antibacterial, anti-proliferative, and anti-inflammatory effects. Catalyzes S-adenosylmethionine-dependent regioselective 3'-O-methylation of flavonoids; active on various hydroxylated flavonoid substrates, including quercetin, rhamnetin, luteolin (LUT), 7,8,3'4'-tetrahydroxy-flavone and taxifolin, and, with a lower efficiency, eupatorin and hesperetin. The polypeptide is Flavonoid 3'-O-methyltransferase 3 (Mentha piperita (Peppermint)).